A 285-amino-acid polypeptide reads, in one-letter code: Sulfoquinovosyl glycerol transport system permease protein SmoH (285 aa).

The next 6 helical transmembrane spans lie at 21-41 (FIAA…ILFT), 83-103 (FMVA…AAYA), 115-135 (ILSL…VPLF), 150-170 (LILP…VSFF), 195-215 (VVVP…FVNA), and 250-270 (PVIS…IVIF). The ABC transmembrane type-1 domain occupies 79–270 (LFNSFMVALL…VPVAILIVIF (192 aa)).

Belongs to the binding-protein-dependent transport system permease family. As to quaternary structure, the complex is probably composed of two ATP-binding proteins (SmoE), two transmembrane proteins (SmoG and SmoH) and a solute-binding protein (SmoF).

It localises to the cell inner membrane. Part of the ABC transporter complex SmoEFGH involved in sulfoquinovosyl glycerol (SQGro) uptake. Responsible for the translocation of the substrate across the membrane. This is Sulfoquinovosyl glycerol transport system permease protein SmoH from Agrobacterium fabrum (strain C58 / ATCC 33970) (Agrobacterium tumefaciens (strain C58)).